A 623-amino-acid polypeptide reads, in one-letter code: E3 ubiquitin-protein ligase DTX1 (623 aa).

2 consecutive WWE domains span residues 13 to 93 (HNFG…PVRR) and 94 to 170 (NFFE…RLRR). A disordered region spans residues 224-319 (KVPSGPPPAL…RASIPPGVPA (96 aa)). A compositionally biased stretch (pro residues) spans 227–242 (SGPPPALPPPPPPPIH). The span at 292 to 311 (GQNNLNRPGEQRTSGSSSRA) shows a compositional bias: polar residues. An RING-type zinc finger spans residues 413–474 (CTICMERLVT…DGSLQCPTCK (62 aa)).

This sequence belongs to the Deltex family. May form a homo- or heterodimer with other members of the Deltex family. Probably interacts with Notch1. In terms of tissue distribution, specifically expressed in regions undergoing neuronal differentiation. Mainly colocalizes with Notch1.

It carries out the reaction S-ubiquitinyl-[E2 ubiquitin-conjugating enzyme]-L-cysteine + [acceptor protein]-L-lysine = [E2 ubiquitin-conjugating enzyme]-L-cysteine + N(6)-ubiquitinyl-[acceptor protein]-L-lysine.. It functions in the pathway protein modification; protein ubiquitination. In terms of biological role, regulator of Notch signaling, a signaling pathway involved in cell-cell communications that regulates a broad spectrum of cell-fate determinations. Probably acts both as a positive and negative regulator of Notch, depending on the developmental and cell context. Functions as a ubiquitin ligase protein in vivo, mediating ubiquitination and promoting degradation of MEKK1, suggesting that it may regulate the Notch pathway via some ubiquitin ligase activity. The protein is E3 ubiquitin-protein ligase DTX1 (dtx1) of Xenopus laevis (African clawed frog).